We begin with the raw amino-acid sequence, 250 residues long: tRNA:m(4)X modification enzyme TRM13 (250 aa).

Over residues 1–10 (MGRAPAKRKP) the composition is skewed to basic residues. The interval 1–20 (MGRAPAKRKPSSPPPPPPPG) is disordered. Residues 11 to 20 (SSPPPPPPPG) show a composition bias toward pro residues. The CHHC U11-48K-type zinc-finger motif lies at 62–89 (LVPCPVDPSHTVLEENLEAHVGKCPLKK). Zn(2+)-binding residues include Cys-65, His-71, His-81, and Cys-85.

Belongs to the methyltransferase TRM13 family.

It localises to the nucleus. It is found in the cytoplasm. The enzyme catalyses cytidine(4) in tRNA(Pro) + S-adenosyl-L-methionine = 2'-O-methylcytidine(4) in tRNA(Pro) + S-adenosyl-L-homocysteine + H(+). The catalysed reaction is cytidine(4) in tRNA(Gly)(GCC) + S-adenosyl-L-methionine = 2'-O-methylcytidine(4) in tRNA(Gly)(GCC) + S-adenosyl-L-homocysteine + H(+). It carries out the reaction adenosine(4) in tRNA(His) + S-adenosyl-L-methionine = 2'-O-methyladenosine(4) in tRNA(His) + S-adenosyl-L-homocysteine + H(+). Its function is as follows. tRNA methylase that catalyzes 2'-O-methyladenosine (Am) nucleoside formation on tRNA(Gly)(GCC) in vitro. May 2'-O-methylate cytidine(4) in tRNA(Pro) and tRNA(Gly)(GCC), and adenosine(4) in tRNA(His). Involved in salt stress tolerance. This chain is tRNA:m(4)X modification enzyme TRM13, found in Oryza sativa subsp. japonica (Rice).